We begin with the raw amino-acid sequence, 92 residues long: Small ribosomal subunit protein uS19c (92 aa).

Belongs to the universal ribosomal protein uS19 family.

Its subcellular location is the plastid. The protein localises to the chloroplast. Functionally, protein S19 forms a complex with S13 that binds strongly to the 16S ribosomal RNA. This chain is Small ribosomal subunit protein uS19c (rps19), found in Pisum sativum (Garden pea).